The primary structure comprises 409 residues: Pyrophosphate--fructose 6-phosphate 1-phosphotransferase (409 aa).

Gly14 provides a ligand contact to diphosphate. Residue Asp123 participates in Mg(2+) binding. Substrate contacts are provided by residues 151 to 153, 196 to 198, Glu268, and 325 to 328; these read TID, MGR, and YFAR. The active-site Proton acceptor is the Asp153.

It belongs to the phosphofructokinase type A (PFKA) family. PPi-dependent PFK group II subfamily. Clade 'P' sub-subfamily. In terms of assembly, homotetramer. The cofactor is Mg(2+).

Its subcellular location is the cytoplasm. The catalysed reaction is beta-D-fructose 6-phosphate + diphosphate = beta-D-fructose 1,6-bisphosphate + phosphate + H(+). Its pathway is carbohydrate degradation; glycolysis; D-glyceraldehyde 3-phosphate and glycerone phosphate from D-glucose: step 3/4. Non-allosteric. Its function is as follows. Catalyzes the phosphorylation of D-fructose 6-phosphate, the first committing step of glycolysis. Uses inorganic phosphate (PPi) as phosphoryl donor instead of ATP like common ATP-dependent phosphofructokinases (ATP-PFKs), which renders the reaction reversible, and can thus function both in glycolysis and gluconeogenesis. Consistently, PPi-PFK can replace the enzymes of both the forward (ATP-PFK) and reverse (fructose-bisphosphatase (FBPase)) reactions. This Methylotuvimicrobium alcaliphilum (strain DSM 19304 / NCIMB 14124 / VKM B-2133 / 20Z) (Methylomicrobium alcaliphilum) protein is Pyrophosphate--fructose 6-phosphate 1-phosphotransferase.